A 420-amino-acid polypeptide reads, in one-letter code: Histidine--tRNA ligase (420 aa).

This sequence belongs to the class-II aminoacyl-tRNA synthetase family. As to quaternary structure, homodimer.

The protein localises to the cytoplasm. The catalysed reaction is tRNA(His) + L-histidine + ATP = L-histidyl-tRNA(His) + AMP + diphosphate + H(+). The protein is Histidine--tRNA ligase of Desulforudis audaxviator (strain MP104C).